The following is a 172-amino-acid chain: NADH-ubiquinone oxidoreductase chain 6 (172 aa).

A run of 5 helical transmembrane segments spans residues Met-1 to Leu-21, Ile-26 to Gly-48, Gly-52 to Ala-74, Trp-86 to Phe-106, and Cys-147 to Ile-167.

The protein belongs to the complex I subunit 6 family. Core subunit of respiratory chain NADH dehydrogenase (Complex I) which is composed of 45 different subunits.

It localises to the mitochondrion inner membrane. The catalysed reaction is a ubiquinone + NADH + 5 H(+)(in) = a ubiquinol + NAD(+) + 4 H(+)(out). In terms of biological role, core subunit of the mitochondrial membrane respiratory chain NADH dehydrogenase (Complex I) which catalyzes electron transfer from NADH through the respiratory chain, using ubiquinone as an electron acceptor. Essential for the catalytic activity and assembly of complex I. The protein is NADH-ubiquinone oxidoreductase chain 6 of Rattus norvegicus (Rat).